Reading from the N-terminus, the 491-residue chain is Probable glycine dehydrogenase (decarboxylating) subunit 2 (491 aa).

Position 264 is an N6-(pyridoxal phosphate)lysine (lysine 264).

Belongs to the GcvP family. C-terminal subunit subfamily. As to quaternary structure, the glycine cleavage system is composed of four proteins: P, T, L and H. In this organism, the P 'protein' is a heterodimer of two subunits. Requires pyridoxal 5'-phosphate as cofactor.

The catalysed reaction is N(6)-[(R)-lipoyl]-L-lysyl-[glycine-cleavage complex H protein] + glycine + H(+) = N(6)-[(R)-S(8)-aminomethyldihydrolipoyl]-L-lysyl-[glycine-cleavage complex H protein] + CO2. Its function is as follows. The glycine cleavage system catalyzes the degradation of glycine. The P protein binds the alpha-amino group of glycine through its pyridoxal phosphate cofactor; CO(2) is released and the remaining methylamine moiety is then transferred to the lipoamide cofactor of the H protein. This Coxiella burnetii (strain CbuK_Q154) (Coxiella burnetii (strain Q154)) protein is Probable glycine dehydrogenase (decarboxylating) subunit 2.